Here is a 331-residue protein sequence, read N- to C-terminus: XylDLEGF operon transcriptional activator 1 (331 aa).

In terms of domain architecture, HTH araC/xylS-type spans 214–315 (ERVVQFIEEN…GELPSDTLRR (102 aa)). 2 DNA-binding regions (H-T-H motif) span residues 231 to 252 (ERLAELALMSPRSLYTLFEKHA) and 282 to 305 (VTEMALDYGFFHTGRFAENYRSTF).

The protein localises to the cytoplasm. Regulatory protein of the TOL plasmid xyl operons. XylS activates the xylXYZLTEGFJQKIH operon required for the degradation of toluene, m-xylene and p-xylene. This is XylDLEGF operon transcriptional activator 1 (xylS1) from Pseudomonas putida (Arthrobacter siderocapsulatus).